We begin with the raw amino-acid sequence, 236 residues long: Adenylate dimethylallyltransferase (236 aa).

The protein belongs to the isopentenyl transferase family.

It carries out the reaction dimethylallyl diphosphate + AMP = N(6)-(dimethylallyl)adenosine 5'-phosphate + diphosphate. Its function is as follows. Transfers dimethylallyl groups to AMP as part of the biosynthesis of cytokinin phytohormones. This Allorhizobium ampelinum (strain ATCC BAA-846 / DSM 112012 / S4) (Agrobacterium vitis (strain S4)) protein is Adenylate dimethylallyltransferase (ipt).